Reading from the N-terminus, the 196-residue chain is Dual-action ribosomal maturation protein DarP (196 aa).

It belongs to the DarP family.

Its subcellular location is the cytoplasm. Member of a network of 50S ribosomal subunit biogenesis factors which assembles along the 30S-50S interface, preventing incorrect 23S rRNA structures from forming. Promotes peptidyl transferase center (PTC) maturation. The protein is Dual-action ribosomal maturation protein DarP of Stenotrophomonas maltophilia (strain R551-3).